A 333-amino-acid chain; its full sequence is Squamosa promoter-binding-like protein 8 (333 aa).

The disordered stretch occupies residues 1-28 (MLDYEWDNPSSIVLSGDERNPDSDPTRS). The span at 16–25 (GDERNPDSDP) shows a compositional bias: basic and acidic residues. The interval 179-269 (MANSLSTPRC…RKCHQSASAT (91 aa)) is sufficient and necessary for DNA binding. The SBP-type zinc-finger motif lies at 185 to 262 (TPRCQAEGCN…ADHNRRRRKC (78 aa)). Zn(2+)-binding residues include Cys188, Cys193, Cys210, His213, Cys229, Cys232, His236, and Cys248. A Bipartite nuclear localization signal motif is present at residues 245–261 (KRSCRKRLADHNRRRRK). Disordered stretches follow at residues 254 to 303 (DHNR…TISL) and 314 to 333 (TASS…FSSG). The segment covering 264–284 (QSASATQDTGTGKTTPKSPND) has biased composition (polar residues). Over residues 289–299 (ASSSPSSNAPP) the composition is skewed to low complexity.

Zn(2+) is required as a cofactor. In terms of tissue distribution, expressed in shoot apical region and early floral tissues. Transcripts levels increase in developing pollen sacs, and decrease in later stage of anther development. Strongly expressed in the placental region of the carpels.

It is found in the nucleus. It localises to the cytoplasm. In terms of biological role, trans-acting factor that binds specifically to the consensus nucleotide sequence 5'-TNCGTACAA-3'. Binds specifically to the 5'-GTAC-3' core sequence. Involved in development and floral organogenesis. Required for ovule differentiation, pollen production, filament elongation, seed formation and siliques elongation. Also seems to play a role in the formation of trichomes on sepals. May positively modulate gibberellin (GA) signaling in flower. The protein is Squamosa promoter-binding-like protein 8 (SPL8) of Arabidopsis thaliana (Mouse-ear cress).